A 583-amino-acid chain; its full sequence is Sensor protein SrrB (583 aa).

Residues 1 to 11 (MMSRLNSVVIK) are Cytoplasmic-facing. A helical transmembrane segment spans residues 12 to 32 (LWLTIILIVTTVLILLSIALI). Residues 33–174 (TFMQYYFTQE…SIEDTNNAIT (142 aa)) are Extracellular-facing. Residues 175–195 (IITIITAVIFLTITTVFAFFL) form a helical membrane-spanning segment. At 196–583 (SSRITKPLRR…TFIIKLPKPE (388 aa)) the chain is on the cytoplasmic side. One can recognise an HAMP domain in the interval 197 to 249 (SRITKPLRRLRDQATRVSEGDYSYKPSVTTKDEIGQLSQAFNQMSTEIEEHVD). The Histidine kinase domain maps to 366–583 (NVSHELRTPI…TFIIKLPKPE (218 aa)). The residue at position 369 (His-369) is a Phosphohistidine; by autocatalysis.

It is found in the cell membrane. The enzyme catalyses ATP + protein L-histidine = ADP + protein N-phospho-L-histidine.. In terms of biological role, member of the two-component regulatory system SrrA/SrrB, which is involved in the global regulation of staphylococcal virulence factors in response to environmental oxygen levels as well as biofilm formation. Also plays an essential role in host-derived nitric oxide resistance by regulating hmp/flavohemoglobin, an enzyme that detoxifies nitric oxide by converting it to nitrate. Functions as a sensor protein kinase which is autophosphorylated at a histidine residue and transfers its phosphate group to SrrA. In turn, SrrA binds to the upstream promoter regions of the target genes to positively and negatively regulate their expression. This is Sensor protein SrrB (srrB) from Staphylococcus aureus (strain MRSA252).